A 533-amino-acid polypeptide reads, in one-letter code: MNEENTDGTNGCSKVRTGTQNEAALLALMEKTGYNMVQENGQRKFGGPPPGWEGPPPPRGCEVFVGKIPRDMYEDELVPVFERAGKIYEFRLMMEFSGENRGYAFVMYTTKEEAQLAIRILNNYEIRPGKFIGVCVSLDNCRLFIGAIPKEKKKEEILDEMKKVTEGVVDVIVYPSATDKTKNRGFAFVEYESHRAAAMARRKLIPGTFQLWGHTIQVDWADPEKEVDEETMQRVKVLYVRNLMISTTEETIKAEFSKFKPGAVERVKKLRDYAFVHFFHREDAVAAMSVMNGKCIDGASIEVTLAKPVNKENTWRQHLNGQISPNSENLLVYANKEESHSKSLGKPPTLPTRLNGQHSPSPPEIERCTYPFFPGTKLTPISMYSLKSNHFNSAVMHLDYYCNKNNWAPPEYYLYSTTSQDGKVLLVYKIVIPAIANGSQSYFMPDKLCTTLEDAKELAAQFTLLHLDFNFRRSSINSLSPVSTTLSSGTPSMLPYTSRPSSYPSYPLSPTISLANGSHVGQRLYISNQASFF.

3 consecutive RRM domains span residues 61-139 (CEVF…VSLD), 141-223 (CRLF…WADP), and 236-308 (KVLY…LAKP). Positions 338–362 (ESHSKSLGKPPTLPTRLNGQHSPSP) are disordered.

Interacts with YTHDC2, MEIOC, MOV10, CNOT6L, DDX4, UPF1 and PABPC1. In terms of tissue distribution, expressed in the testis and ovary (at protein level). Expressed in spermatogonia and spermatocytes in testis (at protein level).

It is found in the cytoplasm. Essential for male and female fertility, playing a crucial role in regulating germ cell development by ensuring the proper progression of meiosis prophase I. Regulates mitotic-to-meiotic transition in spermatogenesis by forming a complex with MEIOC and YTHDC2 which recognizes and down-regulates mitotic transcripts for a successful meiotic entry. Required for normal synaptonemal complex formation during meiosis, binding meiotic cohesin subunit mRNAs containing GCCUAU/GUUCGA motifs in their 3'UTRs regions and positively regulating their translation. Required for spermatogonial differentiation in both developing and adult testis. The sequence is that of Probable RNA-binding protein 46 from Mus musculus (Mouse).